A 240-amino-acid chain; its full sequence is EF-hand domain-containing protein D2 (240 aa).

A2 carries the N-acetylalanine modification. Residue S11 is modified to Phosphoserine. The segment at 13–38 (RLQMEGEGGGETPEQPGLNGAAAAAA) is disordered. A phosphoserine mark is found at S74 and S76. Y83 is subject to Phosphotyrosine. EF-hand domains lie at 92 to 127 (KQIK…LGAP) and 128 to 163 (QTHL…AAAG). 8 residues coordinate Ca(2+): D105, D109, E116, D141, D143, D145, K147, and E152. K233 is subject to N6-acetyllysine.

Interacts with CASP9; with inactive form. Found in lymphocytes; preferentially expressed in CD8+ cells.

Its subcellular location is the membrane raft. Its function is as follows. May regulate B-cell receptor (BCR)-induced immature and primary B-cell apoptosis. Plays a role as negative regulator of the canonical NF-kappa-B-activating branch. Controls spontaneous apoptosis through the regulation of BCL2L1 abundance. This chain is EF-hand domain-containing protein D2 (EFHD2), found in Homo sapiens (Human).